The primary structure comprises 176 residues: Ribosome maturation factor RimP (176 aa).

It belongs to the RimP family.

The protein localises to the cytoplasm. In terms of biological role, required for maturation of 30S ribosomal subunits. The protein is Ribosome maturation factor RimP of Chlorobium limicola (strain DSM 245 / NBRC 103803 / 6330).